The chain runs to 207 residues: Ribosomal RNA small subunit methyltransferase G (207 aa).

Residues Gly-76, Gln-81, 127–128, and Arg-141 each bind S-adenosyl-L-methionine; that span reads VE.

This sequence belongs to the methyltransferase superfamily. RNA methyltransferase RsmG family.

The protein localises to the cytoplasm. The catalysed reaction is guanosine(527) in 16S rRNA + S-adenosyl-L-methionine = N(7)-methylguanosine(527) in 16S rRNA + S-adenosyl-L-homocysteine. Functionally, specifically methylates the N7 position of guanine in position 527 of 16S rRNA. This Neisseria gonorrhoeae (strain ATCC 700825 / FA 1090) protein is Ribosomal RNA small subunit methyltransferase G.